A 162-amino-acid chain; its full sequence is Nucleotide-binding protein Francci3_0558 (162 aa).

This sequence belongs to the YajQ family.

Nucleotide-binding protein. The chain is Nucleotide-binding protein Francci3_0558 from Frankia casuarinae (strain DSM 45818 / CECT 9043 / HFP020203 / CcI3).